Here is a 199-residue protein sequence, read N- to C-terminus: ATP synthase subunit b (199 aa).

The chain crosses the membrane as a helical span at residues 5 to 25 (SFVTTLSVCVMILGLAALGFA).

It belongs to the ATPase B chain family. In terms of assembly, F-type ATPases have 2 components, F(1) - the catalytic core - and F(0) - the membrane proton channel. F(1) has five subunits: alpha(3), beta(3), gamma(1), delta(1), epsilon(1). F(0) has three main subunits: a(1), b(2) and c(10-14). The alpha and beta chains form an alternating ring which encloses part of the gamma chain. F(1) is attached to F(0) by a central stalk formed by the gamma and epsilon chains, while a peripheral stalk is formed by the delta and b chains.

It localises to the cell inner membrane. F(1)F(0) ATP synthase produces ATP from ADP in the presence of a proton or sodium gradient. F-type ATPases consist of two structural domains, F(1) containing the extramembraneous catalytic core and F(0) containing the membrane proton channel, linked together by a central stalk and a peripheral stalk. During catalysis, ATP synthesis in the catalytic domain of F(1) is coupled via a rotary mechanism of the central stalk subunits to proton translocation. Its function is as follows. Component of the F(0) channel, it forms part of the peripheral stalk, linking F(1) to F(0). This is ATP synthase subunit b from Citrifermentans bemidjiense (strain ATCC BAA-1014 / DSM 16622 / JCM 12645 / Bem) (Geobacter bemidjiensis).